We begin with the raw amino-acid sequence, 311 residues long: Transcription factor bHLH145 (311 aa).

The bHLH domain occupies 253-302; that stretch reads FLKRSKLSSNKIGEEKIFETVSLLRSVVPGEELVDPILVIDRAIDYLKSL.

In terms of assembly, homodimer.

Its subcellular location is the nucleus. The polypeptide is Transcription factor bHLH145 (BHLH145) (Arabidopsis thaliana (Mouse-ear cress)).